Here is a 591-residue protein sequence, read N- to C-terminus: Potassium-transporting ATPase potassium-binding subunit (591 aa).

The next 10 helical transmembrane spans lie at 6–26 (WFQI…LGVF), 63–83 (WTEY…MLYI), 137–157 (GLAY…IAFI), 179–199 (VLWV…SQGV), 272–292 (LSNL…TYTL), 303–323 (WAVW…VYWA), 405–425 (AGMY…GLMV), 444–464 (AMLV…ISSV), 510–530 (VAIG…MLAI), and 553–573 (LFSV…FFPA).

Belongs to the KdpA family. In terms of assembly, the system is composed of three essential subunits: KdpA, KdpB and KdpC.

The protein localises to the cell inner membrane. Part of the high-affinity ATP-driven potassium transport (or Kdp) system, which catalyzes the hydrolysis of ATP coupled with the electrogenic transport of potassium into the cytoplasm. This subunit binds the periplasmic potassium ions and delivers the ions to the membrane domain of KdpB through an intramembrane tunnel. This is Potassium-transporting ATPase potassium-binding subunit from Koribacter versatilis (strain Ellin345).